Consider the following 304-residue polypeptide: Splicing factor U2af small subunit B (304 aa).

The segment at 12–40 adopts a C3H1-type 1 zinc-finger fold; it reads EKDRVNCPFYFKIGACRHGDRCSRLHNRP. The 103-residue stretch at 44 to 146 folds into the RRM domain; the sequence is PTIVLANMYQ…RPIIVEYSPV (103 aa). The C3H1-type 2 zinc finger occupies 148–175; the sequence is DFREATCRQFEENSCNRGGYCNFMHVKQ. Positions 184 to 207 are enriched in basic residues; sequence LYGGRSRRSHGRSRSPSPRHRRGN. Residues 184 to 304 are disordered; that stretch reads LYGGRSRRSH…QWNREREEKP (121 aa). Residues 208–220 are compositionally biased toward basic and acidic residues; it reads RDRDDFRRERDGY. The span at 221 to 258 shows a compositional bias: gly residues; that stretch reads RGGGDGYRGGGGGGGGDGYRGGDSYRGGGGGGRRGGGS. Positions 268–280 are enriched in basic residues; sequence RRRHGSPPRRARS. A compositionally biased stretch (basic and acidic residues) spans 281–304; it reads PVRESSEERRAKIEQWNREREEKP.

It belongs to the splicing factor SR family.

It is found in the nucleus. Necessary for the splicing of pre-mRNA. The sequence is that of Splicing factor U2af small subunit B (U2AF35B) from Oryza sativa subsp. japonica (Rice).